A 295-amino-acid chain; its full sequence is Putative NADH-ubiquinone oxidoreductase MJ0520 (295 aa).

8 consecutive transmembrane segments (helical) span residues 8 to 28 (LIGA…LLGL), 69 to 89 (LYIF…IIAI), 129 to 149 (VFSA…YLTT), 163 to 183 (IHGS…ILLV), 199 to 219 (IVSG…YIAE), 220 to 240 (AIAY…PLVI), 243 to 263 (PVLT…VNGL), and 273 to 293 (VMLQ…RLIV).

This sequence belongs to the complex I subunit 1 family.

The protein resides in the cell membrane. The catalysed reaction is a ubiquinone + NADH + 5 H(+)(in) = a ubiquinol + NAD(+) + 4 H(+)(out). This is Putative NADH-ubiquinone oxidoreductase MJ0520 from Methanocaldococcus jannaschii (strain ATCC 43067 / DSM 2661 / JAL-1 / JCM 10045 / NBRC 100440) (Methanococcus jannaschii).